A 502-amino-acid chain; its full sequence is NAD(P)H-quinone oxidoreductase chain 4, chloroplastic (502 aa).

Helical transmembrane passes span 4–24, 39–59, 89–109, 115–132, 136–156, 169–189, 209–229, 244–264, 276–296, 315–335, 387–407, 418–438, and 466–486; these read YPWL…IPLL, LGIC…HFDI, IGLT…AWPV, LFHS…GLFT, ILLF…LLSM, FILY…TMGL, IALE…KLPI, HYST…YGLI, SIFA…AASI, MGFV…GAIL, SLAL…PGIV, IIIT…LLSM, and IFIS…PNLI.

The protein belongs to the complex I subunit 4 family.

It localises to the plastid. The protein localises to the chloroplast thylakoid membrane. It catalyses the reaction a plastoquinone + NADH + (n+1) H(+)(in) = a plastoquinol + NAD(+) + n H(+)(out). The catalysed reaction is a plastoquinone + NADPH + (n+1) H(+)(in) = a plastoquinol + NADP(+) + n H(+)(out). This Huperzia lucidula (Shining clubmoss) protein is NAD(P)H-quinone oxidoreductase chain 4, chloroplastic.